The chain runs to 469 residues: Ribulose bisphosphate carboxylase large chain (469 aa).

Residue K7 is modified to N6,N6,N6-trimethyllysine. 2 residues coordinate substrate: N116 and T166. K168 (proton acceptor) is an active-site residue. Residue K170 coordinates substrate. Mg(2+)-binding residues include K194, D196, and E197. K194 is subject to N6-carboxylysine. The active-site Proton acceptor is the H287. Residues R288, H320, and S372 each contribute to the substrate site.

The protein belongs to the RuBisCO large chain family. Type I subfamily. As to quaternary structure, heterohexadecamer of 8 large chains and 8 small chains; disulfide-linked. The disulfide link is formed within the large subunit homodimers. The cofactor is Mg(2+). Post-translationally, the disulfide bond which can form in the large chain dimeric partners within the hexadecamer appears to be associated with oxidative stress and protein turnover.

The protein localises to the plastid. It is found in the chloroplast. It carries out the reaction 2 (2R)-3-phosphoglycerate + 2 H(+) = D-ribulose 1,5-bisphosphate + CO2 + H2O. It catalyses the reaction D-ribulose 1,5-bisphosphate + O2 = 2-phosphoglycolate + (2R)-3-phosphoglycerate + 2 H(+). In terms of biological role, ruBisCO catalyzes two reactions: the carboxylation of D-ribulose 1,5-bisphosphate, the primary event in carbon dioxide fixation, as well as the oxidative fragmentation of the pentose substrate in the photorespiration process. Both reactions occur simultaneously and in competition at the same active site. This is Ribulose bisphosphate carboxylase large chain from Pachira aquatica (Guiana chestnut).